Here is a 450-residue protein sequence, read N- to C-terminus: UDP-N-acetylmuramoylalanine--D-glutamate ligase (450 aa).

119–125 (GSNGKTT) contributes to the ATP binding site.

Belongs to the MurCDEF family.

It is found in the cytoplasm. The catalysed reaction is UDP-N-acetyl-alpha-D-muramoyl-L-alanine + D-glutamate + ATP = UDP-N-acetyl-alpha-D-muramoyl-L-alanyl-D-glutamate + ADP + phosphate + H(+). Its pathway is cell wall biogenesis; peptidoglycan biosynthesis. In terms of biological role, cell wall formation. Catalyzes the addition of glutamate to the nucleotide precursor UDP-N-acetylmuramoyl-L-alanine (UMA). This chain is UDP-N-acetylmuramoylalanine--D-glutamate ligase, found in Bacillus cereus (strain G9842).